Reading from the N-terminus, the 436-residue chain is UPF0597 protein YhaM (436 aa).

Belongs to the UPF0597 family.

Its function is as follows. Thought to be a D-serine dehydratase, however it does not complement a dsdA (D-serine dehydratase) mutant in strain CFT073, suggesting it may not have that function. This is UPF0597 protein YhaM from Escherichia coli O157:H7.